Reading from the N-terminus, the 356-residue chain is GMP reductase (356 aa).

Residues 26–27 (SR), Lys78, 132–134 (DVA), and 183–184 (IG) contribute to the NADP(+) site. K(+) contacts are provided by Gly184, Gly186, and Cys189. Cys189 (thioimidate intermediate) is an active-site residue. Thr191 functions as the Proton donor/acceptor in the catalytic mechanism. Arg192 provides a ligand contact to K(+). GMP-binding positions include 222-224 (DGG), 245-246 (GG), 271-273 (GMS), and 289-293 (RASEG). Residues Met272, 288 to 289 (YR), and 317 to 320 (SACT) contribute to the NADP(+) site.

This sequence belongs to the IMPDH/GMPR family.

The enzyme catalyses IMP + NH4(+) + NADP(+) = GMP + NADPH + 2 H(+). Functionally, catalyzes the irreversible NADPH-dependent deamination of GMP to IMP. It functions in the conversion of nucleobase, nucleoside and nucleotide derivatives of G to A nucleotides, and in maintaining the intracellular balance of A and G nucleotides. The chain is GMP reductase from Ascaris suum (Pig roundworm).